The primary structure comprises 247 residues: Adenosylcobinamide-GDP ribazoletransferase (247 aa).

The next 6 membrane-spanning stretches (helical) occupy residues 34–54 (IVMF…IFIL), 59–79 (CGIP…TGGF), 113–133 (GGLA…ELAL), 138–158 (MLAA…LLMY), 171–191 (VFIG…AVIV), and 194–214 (VLLP…AIFI).

Belongs to the CobS family. Requires Mg(2+) as cofactor.

Its subcellular location is the cell inner membrane. The enzyme catalyses alpha-ribazole + adenosylcob(III)inamide-GDP = adenosylcob(III)alamin + GMP + H(+). The catalysed reaction is alpha-ribazole 5'-phosphate + adenosylcob(III)inamide-GDP = adenosylcob(III)alamin 5'-phosphate + GMP + H(+). It participates in cofactor biosynthesis; adenosylcobalamin biosynthesis; adenosylcobalamin from cob(II)yrinate a,c-diamide: step 7/7. Functionally, joins adenosylcobinamide-GDP and alpha-ribazole to generate adenosylcobalamin (Ado-cobalamin). Also synthesizes adenosylcobalamin 5'-phosphate from adenosylcobinamide-GDP and alpha-ribazole 5'-phosphate. This Salmonella schwarzengrund (strain CVM19633) protein is Adenosylcobinamide-GDP ribazoletransferase.